A 153-amino-acid chain; its full sequence is Proline-rich membrane anchor 1 (153 aa).

Positions 1 to 35 (MLLRDLVLRRGCCWSSLLLHCALHPLWGFVQVTHG) are cleaved as a signal peptide. Residues 36–92 (EPQKSCSKVTDSCRHVCQCRPPPPLPPPPPPPPPPRLLSAPAPNSTSCPTEESWWSG) are Extracellular-facing. The PRAD domain maps to 56–70 (PPPPLPPPPPPPPPP). Pro residues predominate over residues 59-71 (PLPPPPPPPPPPR). Residues 59–79 (PLPPPPPPPPPPRLLSAPAPN) are disordered. N79 carries an N-linked (GlcNAc...) asparagine glycan. A helical transmembrane segment spans residues 93–113 (LVIIIAVCCASLVFLTVLVII). Residues 114-153 (CYKAIKRKPLRKDENGTSVAEYPMSASQSNKGVDVNNAVV) lie on the Cytoplasmic side of the membrane.

Interacts with ACHE, probably through disulfide bonds.

The protein localises to the cell membrane. It localises to the cell junction. Its subcellular location is the synapse. Required to anchor acetylcholinesterase (ACHE) to the basal lamina of the neuromuscular junction and to the membrane of neuronal synapses in brain. Also able to organize ACHE into tetramers. The protein is Proline-rich membrane anchor 1 (PRIMA1) of Homo sapiens (Human).